A 1099-amino-acid polypeptide reads, in one-letter code: ATP-dependent helicase/deoxyribonuclease subunit B (1099 aa).

Cys-766, Cys-1056, Cys-1059, and Cys-1065 together coordinate [4Fe-4S] cluster.

The protein belongs to the helicase family. AddB/RexB type 2 subfamily. Heterodimer of AddA and RexB. The cofactor is Mg(2+). [4Fe-4S] cluster serves as cofactor.

Functionally, the heterodimer acts as both an ATP-dependent DNA helicase and an ATP-dependent, dual-direction single-stranded exonuclease. Recognizes the chi site generating a DNA molecule suitable for the initiation of homologous recombination. This subunit has 5' -&gt; 3' nuclease activity but not helicase activity. The protein is ATP-dependent helicase/deoxyribonuclease subunit B of Lactococcus lactis subsp. lactis (strain IL1403) (Streptococcus lactis).